We begin with the raw amino-acid sequence, 208 residues long: Transmembrane protein 222 (208 aa).

The disordered stretch occupies residues 1–34 (MAEAEGSSPLLLQPPPPPPRMAEVETPTGAETDM). The Extracellular segment spans residues 1–55 (MAEAEGSSPLLLQPPPPPPRMAEVETPTGAETDMKQYHGSGGVVMDVERSRFPYC). Residues 56–76 (VVWTPIPVLTWFFPIIGHMGI) traverse the membrane as a helical segment. Over 77 to 164 (CTSAGVIRDF…MRYNNSTNWN (88 aa)) the chain is Cytoplasmic. The helical transmembrane segment at 165–185 (MVTLCCFCLIYGKYVSVGAFV) threads the bilayer. Residue K186 is a topological domain, extracellular. Residues 187–207 (TWLPFVLLLGIILTVSLVFNL) form a helical membrane-spanning segment. A topological domain (cytoplasmic) is located at residue R208.

It is found in the membrane. Its subcellular location is the cell projection. The protein localises to the dendrite. The sequence is that of Transmembrane protein 222 (Tmem222) from Mus musculus (Mouse).